The following is a 487-amino-acid chain: UDP-N-acetylmuramate--L-alanine ligase (487 aa).

126–132 is an ATP binding site; it reads GTHGKTT.

This sequence belongs to the MurCDEF family.

The protein localises to the cytoplasm. The enzyme catalyses UDP-N-acetyl-alpha-D-muramate + L-alanine + ATP = UDP-N-acetyl-alpha-D-muramoyl-L-alanine + ADP + phosphate + H(+). The protein operates within cell wall biogenesis; peptidoglycan biosynthesis. Functionally, cell wall formation. This is UDP-N-acetylmuramate--L-alanine ligase from Proteus mirabilis (strain HI4320).